The sequence spans 229 residues: MKLSTDLRAFESRIGHAFREPDRLLRAVTHASLSSATRPDNQRLEFLGDRVLGLVMAEALLAADKAATEGQLAPRFNALVRKETCAAVAREVGLGDVLKLGRSEMMSGGRRKEALLGDALEAVIAAVYLDAGFEAARRLVLRLWGERIAQVEADARDAKTALQEWAQARGLPPPCYEAVDRSGPDHAPIFTVEVRLGNGETERSAAGTKRVAEQAAARALLARMEARDD.

The RNase III domain occupies 7-132; that stretch reads LRAFESRIGH…VIAAVYLDAG (126 aa). E45 lines the Mg(2+) pocket. Residue D49 is part of the active site. Positions 118 and 121 each coordinate Mg(2+). E121 is a catalytic residue. The 70-residue stretch at 157–226 folds into the DRBM domain; sequence DAKTALQEWA…ARALLARMEA (70 aa).

The protein belongs to the ribonuclease III family. As to quaternary structure, homodimer. The cofactor is Mg(2+).

It is found in the cytoplasm. It carries out the reaction Endonucleolytic cleavage to 5'-phosphomonoester.. Functionally, digests double-stranded RNA. Involved in the processing of primary rRNA transcript to yield the immediate precursors to the large and small rRNAs (23S and 16S). Processes some mRNAs, and tRNAs when they are encoded in the rRNA operon. Processes pre-crRNA and tracrRNA of type II CRISPR loci if present in the organism. The sequence is that of Ribonuclease 3 from Cereibacter sphaeroides (strain ATCC 17025 / ATH 2.4.3) (Rhodobacter sphaeroides).